Reading from the N-terminus, the 343-residue chain is Cilia- and flagella-associated protein 36 (343 aa).

A phosphoserine mark is found at Ser-85 and Ser-147. Positions 147-181 (SDLEQEEMKILREVLRKSKEEYDQEEERKRKKQSS) form a coiled coil. The disordered stretch occupies residues 165 to 191 (KEEYDQEEERKRKKQSSEGKMEEPPIY). Ser-201 is modified (phosphoserine). Residues 286–323 (SMRKDMRAKQIQNTEQKGKPTREAEEMTEKPEMTAEEK) form a disordered region. Over residues 301–323 (QKGKPTREAEEMTEKPEMTAEEK) the composition is skewed to basic and acidic residues.

The protein belongs to the CFAP36 family. In terms of assembly, interacts with ARL3. As to expression, widely expressed (at protein level).

Its subcellular location is the nucleus. It is found in the cytoplasm. The protein resides in the cell projection. The protein localises to the cilium. It localises to the flagellum. Functionally, may act as an effector for ARL3. This is Cilia- and flagella-associated protein 36 from Rattus norvegicus (Rat).